Consider the following 451-residue polypeptide: Enolase (451 aa).

Position 163 (glutamine 163) interacts with (2R)-2-phosphoglycerate. The active-site Proton donor is glutamate 205. Residues aspartate 258, glutamate 308, and aspartate 335 each contribute to the Mg(2+) site. 4 residues coordinate (2R)-2-phosphoglycerate: lysine 360, arginine 389, serine 390, and lysine 411. The active-site Proton acceptor is the lysine 360.

It belongs to the enolase family. Mg(2+) is required as a cofactor.

The protein resides in the cytoplasm. It is found in the secreted. It localises to the cell surface. The enzyme catalyses (2R)-2-phosphoglycerate = phosphoenolpyruvate + H2O. The protein operates within carbohydrate degradation; glycolysis; pyruvate from D-glyceraldehyde 3-phosphate: step 4/5. Catalyzes the reversible conversion of 2-phosphoglycerate (2-PG) into phosphoenolpyruvate (PEP). It is essential for the degradation of carbohydrates via glycolysis. This is Enolase from Mycoplasma mycoides subsp. mycoides SC (strain CCUG 32753 / NCTC 10114 / PG1).